The chain runs to 59 residues: Chromatin protein Cren7 (59 aa).

The protein belongs to the Cren7 family. In terms of assembly, monomer. Post-translationally, methylated at multiple sites, to varying extents.

The protein localises to the chromosome. Its subcellular location is the cytoplasm. In terms of biological role, a chromatin protein, binds double-stranded DNA without sequence specificity. Constrains negative DNA supercoils. This is Chromatin protein Cren7 from Pyrobaculum arsenaticum (strain DSM 13514 / JCM 11321 / PZ6).